Reading from the N-terminus, the 226-residue chain is Cytochrome c oxidase subunit 2 (226 aa).

The Mitochondrial intermembrane segment spans residues 1–14 (MAYPLQLGLQDATS). Residues 15–45 (PIMEELTSFHDHTLMIVFLISTLVLYIISLM) form a helical membrane-spanning segment. Over 46–59 (LTTKLTHTSTMDAQ) the chain is Mitochondrial matrix. Residues 60–87 (EIETIWTILPAIILIMIALPSLRVLYMM) traverse the membrane as a helical segment. Residues 88-226 (DEINNPALTV…KYFEAWSASM (139 aa)) lie on the Mitochondrial intermembrane side of the membrane. Cu cation contacts are provided by H161, C196, E198, C200, H204, and M207. E198 is a binding site for Mg(2+). Position 218 is a phosphotyrosine (Y218).

It belongs to the cytochrome c oxidase subunit 2 family. In terms of assembly, component of the cytochrome c oxidase (complex IV, CIV), a multisubunit enzyme composed of 14 subunits. The complex is composed of a catalytic core of 3 subunits MT-CO1, MT-CO2 and MT-CO3, encoded in the mitochondrial DNA, and 11 supernumerary subunits COX4I, COX5A, COX5B, COX6A, COX6B, COX6C, COX7A, COX7B, COX7C, COX8 and NDUFA4, which are encoded in the nuclear genome. The complex exists as a monomer or a dimer and forms supercomplexes (SCs) in the inner mitochondrial membrane with NADH-ubiquinone oxidoreductase (complex I, CI) and ubiquinol-cytochrome c oxidoreductase (cytochrome b-c1 complex, complex III, CIII), resulting in different assemblies (supercomplex SCI(1)III(2)IV(1) and megacomplex MCI(2)III(2)IV(2)). Found in a complex with TMEM177, COA6, COX18, COX20, SCO1 and SCO2. Interacts with TMEM177 in a COX20-dependent manner. Interacts with COX20. Interacts with COX16. Cu cation is required as a cofactor.

It localises to the mitochondrion inner membrane. The enzyme catalyses 4 Fe(II)-[cytochrome c] + O2 + 8 H(+)(in) = 4 Fe(III)-[cytochrome c] + 2 H2O + 4 H(+)(out). In terms of biological role, component of the cytochrome c oxidase, the last enzyme in the mitochondrial electron transport chain which drives oxidative phosphorylation. The respiratory chain contains 3 multisubunit complexes succinate dehydrogenase (complex II, CII), ubiquinol-cytochrome c oxidoreductase (cytochrome b-c1 complex, complex III, CIII) and cytochrome c oxidase (complex IV, CIV), that cooperate to transfer electrons derived from NADH and succinate to molecular oxygen, creating an electrochemical gradient over the inner membrane that drives transmembrane transport and the ATP synthase. Cytochrome c oxidase is the component of the respiratory chain that catalyzes the reduction of oxygen to water. Electrons originating from reduced cytochrome c in the intermembrane space (IMS) are transferred via the dinuclear copper A center (CU(A)) of subunit 2 and heme A of subunit 1 to the active site in subunit 1, a binuclear center (BNC) formed by heme A3 and copper B (CU(B)). The BNC reduces molecular oxygen to 2 water molecules using 4 electrons from cytochrome c in the IMS and 4 protons from the mitochondrial matrix. This is Cytochrome c oxidase subunit 2 (MT-CO2) from Perognathus flavus (Silky pocket mouse).